Consider the following 141-residue polypeptide: MAKKVINVVKLQIPAGAATPAPPVGPALGQAGINIVGFTKDFNARTADQKGMIIPVVITVYEDRSFEFITKTPPAAVLLKKAAKVDKGSGEPNTKKVAKVTKDQVKEIAETKMKDLNAADIEAAMRMIEGTARSMGFTVED.

It belongs to the universal ribosomal protein uL11 family. Part of the ribosomal stalk of the 50S ribosomal subunit. Interacts with L10 and the large rRNA to form the base of the stalk. L10 forms an elongated spine to which L12 dimers bind in a sequential fashion forming a multimeric L10(L12)X complex. In terms of processing, one or more lysine residues are methylated.

Forms part of the ribosomal stalk which helps the ribosome interact with GTP-bound translation factors. This Lactobacillus johnsonii (strain CNCM I-12250 / La1 / NCC 533) protein is Large ribosomal subunit protein uL11.